The following is a 716-amino-acid chain: Protein C-mannosyl-transferase DPY19L3 (716 aa).

The Cytoplasmic portion of the chain corresponds to 1 to 43; sequence MMSIRQRREIRATEVSEDFPAQEENVKLENKLPSGCTSRRLWK. Residues 44-64 form a helical membrane-spanning segment; sequence ILSLTIGGTIALCIGLLTSVY. At 65 to 154 the chain is on the lumenal side; the sequence is LATLHENDLW…RVLPVQKYLE (90 aa). Asn-118 is a glycosylation site (N-linked (GlcNAc...) asparagine). The helical transmembrane segment at 155 to 182 threads the bilayer; that stretch reads PVYFYIYTLFGLQAIYVTALYITSWLLS. The Cytoplasmic portion of the chain corresponds to 183–184; the sequence is GT. Positions 185-197 form an intramembrane region, name=3; it reads WLSGLLAAFWYVT. Residues 198-215 are Cytoplasmic-facing; the sequence is NRIDTTRVEFTIPLRENW. Residues 216 to 230 constitute an intramembrane region (name=4); that stretch reads ALPFFAIQIAAITYF. The Cytoplasmic segment spans residues 231 to 239; it reads LRPNLQPLS. A helical membrane pass occupies residues 240 to 256; it reads ERLTLLAIFISTFLFSL. Over 257 to 262 the chain is Lumenal; that stretch reads TWQFNQ. A helical membrane pass occupies residues 263–279; that stretch reads FMMLMQALVLFTLDSLD. Over 280 to 289 the chain is Cytoplasmic; that stretch reads MLPAVKATWL. The chain crosses the membrane as a helical span at residues 290–306; sequence YGIQITSLLLVCILQFF. Residues 307 to 308 are Lumenal-facing; the sequence is NS. The helical transmembrane segment at 309-323 threads the bilayer; it reads MILGSLLISFNLSVF. Over 324–338 the chain is Cytoplasmic; the sequence is IARKLQKNLKTGSFL. A helical membrane pass occupies residues 339 to 359; it reads NRLGKLLLHLFMVLCLTLFLN. Residues 360 to 414 are Lumenal-facing; the sequence is NIIKKILNLKSDEHIFKFLKAKFGLGATRDFDANLYLCEEAFGLLPFNTFGRLSD. The helical transmembrane segment at 415–437 threads the bilayer; sequence TLLFYAYIFVLSITVIVAFVVAF. The Cytoplasmic segment spans residues 438-465; that stretch reads HNLSDSTNQQSVGKMEKGTVDLKPETAY. Residues 466–485 form a helical membrane-spanning segment; it reads NLIHTILFGFLALSTMRMKY. Residues 486-487 lie on the Lumenal side of the membrane; that stretch reads LW. Residues 488-499 traverse the membrane as a helical segment; sequence TSHMCVFASFGL. Residues 500-522 lie on the Cytoplasmic side of the membrane; the sequence is CSPEIWELLLKSVHLYNPKRICI. A helical membrane pass occupies residues 523-539; that stretch reads MRYSVPILILLYLCYKF. The Lumenal segment spans residues 540-716; sequence WPGMMDELSE…FHVYKLSRNK (177 aa). Asn-704 carries N-linked (GlcNAc...) asparagine glycosylation.

It belongs to the dpy-19 family.

The protein resides in the endoplasmic reticulum membrane. The catalysed reaction is L-tryptophyl-[protein] + a di-trans,poly-cis-dolichyl beta-D-mannosyl phosphate = C-alpha-D-mannosyl-L-tryptophyl-[protein] + a di-trans,poly-cis-dolichyl phosphate + H(+). It functions in the pathway protein modification; protein glycosylation. Its function is as follows. C-mannosyltransferase that mediates C-mannosylation of tryptophan residues on target proteins. The reaction occurs on the luminal side of the endoplasmic reticulum and involves the transfer of a mannose unit from a dolichylphosphate mannose (Dol-P-Man) donor to an acceptor protein containing a WxxW or WxxC consensus sequence. C-mannosylates RSPO1, a Wnt signaling regulator, preferentially at the first Trp residue in the sequence WxxW. C-mannosylates the netrin receptor UNC5A, preferentially at the third tryptophan of WxxWxxWxxC sequence. In Pongo abelii (Sumatran orangutan), this protein is Protein C-mannosyl-transferase DPY19L3 (DPY19L3).